The sequence spans 106 residues: Thiosulfate sulfurtransferase GlpE (106 aa).

The Rhodanese domain occupies 16 to 104; the sequence is REQGAVLVDV…WRATYPDETV (89 aa). Cysteine 64 functions as the Cysteine persulfide intermediate in the catalytic mechanism.

Belongs to the GlpE family.

Its subcellular location is the cytoplasm. The enzyme catalyses thiosulfate + hydrogen cyanide = thiocyanate + sulfite + 2 H(+). It carries out the reaction thiosulfate + [thioredoxin]-dithiol = [thioredoxin]-disulfide + hydrogen sulfide + sulfite + 2 H(+). Its function is as follows. Transferase that catalyzes the transfer of sulfur from thiosulfate to thiophilic acceptors such as cyanide or dithiols. May function in a CysM-independent thiosulfate assimilation pathway by catalyzing the conversion of thiosulfate to sulfite, which can then be used for L-cysteine biosynthesis. The protein is Thiosulfate sulfurtransferase GlpE of Pseudomonas savastanoi pv. phaseolicola (strain 1448A / Race 6) (Pseudomonas syringae pv. phaseolicola (strain 1448A / Race 6)).